Reading from the N-terminus, the 632-residue chain is Chaperone protein HtpG (632 aa).

Residues Met1 to Arg339 are a; substrate-binding. The interval Glu340–Arg559 is b. The interval Met560–Ala632 is c.

It belongs to the heat shock protein 90 family. As to quaternary structure, homodimer.

Its subcellular location is the cytoplasm. Molecular chaperone. Has ATPase activity. This is Chaperone protein HtpG from Burkholderia mallei (strain NCTC 10247).